We begin with the raw amino-acid sequence, 170 residues long: Ribosome maturation factor RimP (170 aa).

Belongs to the RimP family.

The protein resides in the cytoplasm. In terms of biological role, required for maturation of 30S ribosomal subunits. The protein is Ribosome maturation factor RimP of Chlorobaculum parvum (strain DSM 263 / NCIMB 8327) (Chlorobium vibrioforme subsp. thiosulfatophilum).